A 96-amino-acid chain; its full sequence is Glutamyl-tRNA(Gln) amidotransferase subunit C (96 aa).

It belongs to the GatC family. In terms of assembly, heterotrimer of A, B and C subunits.

It carries out the reaction L-glutamyl-tRNA(Gln) + L-glutamine + ATP + H2O = L-glutaminyl-tRNA(Gln) + L-glutamate + ADP + phosphate + H(+). It catalyses the reaction L-aspartyl-tRNA(Asn) + L-glutamine + ATP + H2O = L-asparaginyl-tRNA(Asn) + L-glutamate + ADP + phosphate + 2 H(+). In terms of biological role, allows the formation of correctly charged Asn-tRNA(Asn) or Gln-tRNA(Gln) through the transamidation of misacylated Asp-tRNA(Asn) or Glu-tRNA(Gln) in organisms which lack either or both of asparaginyl-tRNA or glutaminyl-tRNA synthetases. The reaction takes place in the presence of glutamine and ATP through an activated phospho-Asp-tRNA(Asn) or phospho-Glu-tRNA(Gln). The sequence is that of Glutamyl-tRNA(Gln) amidotransferase subunit C from Nostoc sp. (strain PCC 7120 / SAG 25.82 / UTEX 2576).